The sequence spans 758 residues: 5-methyltetrahydropteroyltriglutamate--homocysteine methyltransferase (758 aa).

5-methyltetrahydropteroyltri-L-glutamate-binding positions include 17–20 (RELK) and lysine 117. L-homocysteine is bound by residues 434–436 (IGS) and glutamate 487. Residues 434–436 (IGS) and glutamate 487 each bind L-methionine. 5-methyltetrahydropteroyltri-L-glutamate is bound by residues 518-519 (RC) and tryptophan 564. Aspartate 602 is an L-homocysteine binding site. An L-methionine-binding site is contributed by aspartate 602. 5-methyltetrahydropteroyltri-L-glutamate is bound at residue glutamate 608. Histidine 644, cysteine 646, and glutamate 668 together coordinate Zn(2+). The Proton donor role is filled by histidine 697. Cysteine 729 contacts Zn(2+).

This sequence belongs to the vitamin-B12 independent methionine synthase family. Zn(2+) serves as cofactor.

The catalysed reaction is 5-methyltetrahydropteroyltri-L-glutamate + L-homocysteine = tetrahydropteroyltri-L-glutamate + L-methionine. The protein operates within amino-acid biosynthesis; L-methionine biosynthesis via de novo pathway; L-methionine from L-homocysteine (MetE route): step 1/1. Catalyzes the transfer of a methyl group from 5-methyltetrahydrofolate to homocysteine resulting in methionine formation. This chain is 5-methyltetrahydropteroyltriglutamate--homocysteine methyltransferase, found in Sodalis glossinidius (strain morsitans).